We begin with the raw amino-acid sequence, 198 residues long: Small ribosomal subunit protein uS4z (198 aa).

Ser68 carries the phosphoserine modification. The S4 RNA-binding domain occupies 109 to 180 (RRLQTIVFKS…PGRVKRRNEK (72 aa)). Residues 163 to 198 (TSPFGGGRPGRVKRRNEKSASKKASGGGDADGDDEE) are disordered.

This sequence belongs to the universal ribosomal protein uS4 family. As to quaternary structure, binds to the translation initiation factors TIF3E1.

In Arabidopsis thaliana (Mouse-ear cress), this protein is Small ribosomal subunit protein uS4z (RPS9B).